Reading from the N-terminus, the 375-residue chain is Sulfite efflux pump SSU1 (375 aa).

At 1–25 the chain is on the cytoplasmic side; it reads MPSGSGFHNIEEAGEKARKRDDWIA. The helical transmembrane segment at 26 to 46 threads the bilayer; sequence ISNFHPGWFSVNMGTGITAIL. Over 47–59 the chain is Extracellular; that stretch reads LQNLPYQFPGLHY. The chain crosses the membrane as a helical span at residues 60–80; sequence IAVILFILNVIIFFLFLTISI. Over 81-101 the chain is Cytoplasmic; sequence TRYCLWPDKFKAMLAHPAHSM. A helical transmembrane segment spans residues 102 to 122; it reads LLGTFPMGFATIINCIVFICV. The Extracellular segment spans residues 123–135; sequence PVWGEWASRFAWG. Residues 136 to 156 form a helical membrane-spanning segment; the sequence is LWWIDAAVSVAICYFVPFMLM. The Cytoplasmic segment spans residues 157–167; it reads TKHTSSLETMT. A helical transmembrane segment spans residues 168–188; the sequence is AAWLLPIVAPVVAAASGGVVA. Topologically, residues 189 to 200 are extracellular; that stretch reads DSLQNDTHALIT. N-linked (GlcNAc...) asparagine glycosylation is present at N193. The helical transmembrane segment at 201 to 221 threads the bilayer; it reads ILVCYVMWGSAVPLAMVILVI. Topologically, residues 222–234 are cytoplasmic; it reads YFQRLAIHKLVPR. A helical membrane pass occupies residues 235–255; sequence AAIVSALLPIGPLGQGGFGLM. The Extracellular segment spans residues 256 to 277; that stretch reads QLGVVAKRVFPRLDFLAPIAGD. The chain crosses the membrane as a helical span at residues 278 to 298; sequence IFYVMGAFIAMIMWGFGLIWL. Residues 299–309 are Cytoplasmic-facing; the sequence is WFALASFTRGK. Residues 310 to 330 traverse the membrane as a helical segment; that stretch reads FYFNIGWWAFTFPLGVFTTAT. Residues 331-343 are Extracellular-facing; sequence TQMGKEFNSPFFD. The helical transmembrane segment at 344 to 364 threads the bilayer; it reads ILGTFFSIVVTCMWVLVFALT. Residues 365–375 are Cytoplasmic-facing; that stretch reads VYKSCTKELFR.

The protein belongs to the tellurite-resistance/dicarboxylate transporter (TDT) family.

The protein localises to the cell membrane. In terms of biological role, sulphite efflux pump required for the secretion of sulphite as a reducing agent. In the presence of sulphite, cystine in keratin is directly cleaved to cysteine and S-sulphocysteine, and thereby, reduced proteins become accessible to hydrolysis by a variety of secreted endo- and exoproteases. Excretion of sulphite mediated by an efflux pump also represents a detoxification pathway for dermatophytes during infection of the epidermal stratum corneum, hair and nails, which are rich in cysteine. The sequence is that of Sulfite efflux pump SSU1 from Arthroderma benhamiae (strain ATCC MYA-4681 / CBS 112371) (Trichophyton mentagrophytes).